We begin with the raw amino-acid sequence, 1420 residues long: Mediator of RNA polymerase II transcription subunit 13 (1420 aa).

Phosphoserine occurs at positions 370, 375, and 425. Polar residues predominate over residues 416–427 (TTVSNDLENSPL). Positions 416–511 (TTVSNDLENS…TNESNKSISD (96 aa)) are disordered. A compositionally biased stretch (basic and acidic residues) spans 429 to 439 (TELEANGRSLE). The span at 440 to 453 (KVNNSVSKTGSVDT) shows a compositional bias: polar residues. Residues 454–484 (LHNKEGTLEQREQNENLPSDKSDSMVDKELF) show a composition bias toward basic and acidic residues. Low complexity predominate over residues 494–508 (GDSNKSNSTNESNKS). Position 601 is a phosphothreonine (T601). A Phosphoserine; by PKA modification is found at S608. At S636 the chain carries Phosphoserine. The tract at residues 653–691 (LSSSEEEEDEEENGSSDEDLKSLNVRDDMKPSDNISTNT) is disordered. The segment covering 655–669 (SSEEEEDEEENGSSD) has biased composition (acidic residues). Over residues 670 to 683 (EDLKSLNVRDDMKP) the composition is skewed to basic and acidic residues. Phosphoserine is present on S748.

Belongs to the Mediator complex subunit 13 family. As to quaternary structure, component of the SRB8-11 complex which consists of SRB8, SSN2/SRB9, SSN3/SRB10 and SSN8/SRB11. The SRB8-11 complex associates with the Mediator complex. The SSN3/SRB10 and SSN8/SRB11 kinase-cyclin pair also associate with the RNA polymerase II holoenzyme. Phosphorylated. PKA-dependent phosphorylation at 'Ser-608' is enhanced by activation of the RAS signaling pathway.

It localises to the nucleus. Functionally, component of the SRB8-11 complex. The SRB8-11 complex is a regulatory module of the Mediator complex which is itself involved in regulation of basal and activated RNA polymerase II-dependent transcription. The SRB8-11 complex may be involved in the transcriptional repression of a subset of genes regulated by Mediator. It may inhibit the association of the Mediator complex with RNA polymerase II to form the holoenzyme complex. The SRB8-11 complex phosphorylates the C-terminal domain (CTD) of the largest subunit of RNA polymerase II RPB1 at serines 2 and 5. The chain is Mediator of RNA polymerase II transcription subunit 13 (SSN2) from Saccharomyces cerevisiae (strain ATCC 204508 / S288c) (Baker's yeast).